The following is a 120-amino-acid chain: uncharacterized protein (120 aa).

In terms of domain architecture, HIT spans 7-120; the sequence is VFAKIITKNL…KLIGLINNND (114 aa). The Histidine triad motif motif lies at 101-105; that stretch reads HFHFH.

This is an uncharacterized protein from Rickettsia prowazekii (strain Madrid E).